Consider the following 361-residue polypeptide: Queuine tRNA-ribosyltransferase (361 aa).

The active-site Proton acceptor is aspartate 92. Residues 92-96 (DSGGF), aspartate 146, glutamine 189, and glycine 216 contribute to the substrate site. Positions 247–253 (GVGKPAD) are RNA binding. The Nucleophile role is filled by aspartate 266. The interval 271–275 (TRAGR) is RNA binding; important for wobble base 34 recognition. Zn(2+) contacts are provided by cysteine 304, cysteine 306, cysteine 309, and histidine 335.

This sequence belongs to the queuine tRNA-ribosyltransferase family. In terms of assembly, homodimer. Within each dimer, one monomer is responsible for RNA recognition and catalysis, while the other monomer binds to the replacement base PreQ1. The cofactor is Zn(2+).

It catalyses the reaction 7-aminomethyl-7-carbaguanine + guanosine(34) in tRNA = 7-aminomethyl-7-carbaguanosine(34) in tRNA + guanine. Its pathway is tRNA modification; tRNA-queuosine biosynthesis. Its function is as follows. Catalyzes the base-exchange of a guanine (G) residue with the queuine precursor 7-aminomethyl-7-deazaguanine (PreQ1) at position 34 (anticodon wobble position) in tRNAs with GU(N) anticodons (tRNA-Asp, -Asn, -His and -Tyr). Catalysis occurs through a double-displacement mechanism. The nucleophile active site attacks the C1' of nucleotide 34 to detach the guanine base from the RNA, forming a covalent enzyme-RNA intermediate. The proton acceptor active site deprotonates the incoming PreQ1, allowing a nucleophilic attack on the C1' of the ribose to form the product. After dissociation, two additional enzymatic reactions on the tRNA convert PreQ1 to queuine (Q), resulting in the hypermodified nucleoside queuosine (7-(((4,5-cis-dihydroxy-2-cyclopenten-1-yl)amino)methyl)-7-deazaguanosine). This chain is Queuine tRNA-ribosyltransferase, found in Rickettsia massiliae (strain Mtu5).